We begin with the raw amino-acid sequence, 657 residues long: Filensin (657 aa).

The head stretch occupies residues 1 to 38 (MYRSSFLREVRKEKYERSDAYDELRGSPEFDSLAQAQG). Residues 38 to 318 (GLENLQELNE…RIIENEDSRL (281 aa)) enclose the IF rod domain. Residues 39-73 (LENLQELNERFASYINRARVLEQRNTILRKQLETF) are coil 1A. Residues 74-82 (QRMDELVGL) are linker 1. The tract at residues 83 to 182 (DEAFAGQIEF…RYKKNLMEIQ (100 aa)) is coil 1B. A linker 12 region spans residues 183-199 (TYVNILQQIIQTTPRVS). Residues 200-318 (PITTGISEEK…RIIENEDSRL (119 aa)) are coil 2. Residues 319–657 (NSAIAGTPVT…SKKKPGDKGS (339 aa)) are tail. Disordered regions lie at residues 503-530 (IGGDVEPIPELPEPSEPSEKEKRDICER) and 565-593 (PDVSEPEAVPSPGLISPAEPGVLQETDHD). The segment covering 519-530 (PSEKEKRDICER) has biased composition (basic and acidic residues).

Belongs to the intermediate filament family. As to expression, detected in eye lens fiber cells (at protein level). Detected in embryonic eye lens.

The protein resides in the cell membrane. It is found in the cytoplasm. Its subcellular location is the cytoskeleton. It localises to the cell cortex. In terms of biological role, required for the correct formation of lens intermediate filaments. This is Filensin (BFSP1) from Gallus gallus (Chicken).